Here is a 242-residue protein sequence, read N- to C-terminus: MISDINALKYKKVLLKVSGEALMGDKQFGHEYEVIKKIAGDIKEVIDLGVEVAIVVGGGNIYRGINAALVGMDRASADYIGMLATVINALTLQNVMESLNIYTRVLSAIPMMSVCEPYIRRKAKRHMEKKRVVIFAGGTGNPFCTTDSAAVLRAIEMNCDILLKATQVDGVYDSDPKKNPDAKKYFTISYKDVITNNLQVMDTAAIAVARENKLPIRVFSIKEQGNFARVIQDKGEYTTIEE.

16 to 19 (KVSG) is an ATP binding site. Glycine 58 is a UMP binding site. 2 residues coordinate ATP: glycine 59 and arginine 63. Residues aspartate 78 and 139-146 (TGNPFCTT) contribute to the UMP site. ATP contacts are provided by threonine 166, glutamine 167, tyrosine 172, and aspartate 175.

It belongs to the UMP kinase family. In terms of assembly, homohexamer.

It is found in the cytoplasm. The enzyme catalyses UMP + ATP = UDP + ADP. The protein operates within pyrimidine metabolism; CTP biosynthesis via de novo pathway; UDP from UMP (UMPK route): step 1/1. Inhibited by UTP. In terms of biological role, catalyzes the reversible phosphorylation of UMP to UDP. The sequence is that of Uridylate kinase from Rickettsia felis (strain ATCC VR-1525 / URRWXCal2) (Rickettsia azadi).